Consider the following 311-residue polypeptide: p-hydroxybenzoic acid efflux pump subunit AaeA (311 aa).

The helical transmembrane segment at 11–31 threads the bilayer; it reads VGITVLVVVLAVIAIFNVWAF.

The protein belongs to the membrane fusion protein (MFP) (TC 8.A.1) family.

The protein resides in the cell inner membrane. Forms an efflux pump with AaeB. This is p-hydroxybenzoic acid efflux pump subunit AaeA from Yersinia pseudotuberculosis serotype O:3 (strain YPIII).